Here is a 256-residue protein sequence, read N- to C-terminus: Floral homeotic protein APETALA 1-2 (256 aa).

The MADS-box domain occupies 1–61 (MGRGRVQLKR…GKLFEYSTDS (61 aa)). One can recognise a K-box domain in the interval 88 to 178 (NTNWSMEYNR…SKQIKERENV (91 aa)). The disordered stretch occupies residues 187–206 (DEQNHGHNMPPPPPPQQHQI).

As to quaternary structure, homodimer capable of binding to CArG-box sequences.

It localises to the nucleus. Transcription factor that promotes early floral meristem identity in synergy with LEAFY. Displays a redundant function with CAULIFLOWER in the up-regulation of LEAFY. Required subsequently for the transition of an inflorescence meristem into a floral meristem, and for the normal development of sepals and petals in flowers. Regulates positively B class homeotic proteins. In Brassica oleracea var. italica (Broccoli), this protein is Floral homeotic protein APETALA 1-2 (2AP1).